Consider the following 456-residue polypeptide: Bifunctional protein GlmU (456 aa).

Residues 1 to 228 (MPQNTLNIVI…SHLAAGVNNK (228 aa)) form a pyrophosphorylase region. Residues 11-14 (LAAG), lysine 25, glutamine 75, 80-81 (GT), 102-104 (YGD), glycine 138, glutamate 153, asparagine 168, and asparagine 226 contribute to the UDP-N-acetyl-alpha-D-glucosamine site. Mg(2+) is bound at residue aspartate 104. Asparagine 226 contacts Mg(2+). The interval 229–249 (LQLAELERIFQTEQAQELLKA) is linker. Positions 250-456 (GVTLRDPARF…GWVRPEKNKQ (207 aa)) are N-acetyltransferase. Positions 332 and 350 each coordinate UDP-N-acetyl-alpha-D-glucosamine. Catalysis depends on histidine 362, which acts as the Proton acceptor. Residues tyrosine 365 and asparagine 376 each coordinate UDP-N-acetyl-alpha-D-glucosamine. Residues alanine 379, 385-386 (NY), serine 404, alanine 422, and arginine 439 each bind acetyl-CoA.

It in the N-terminal section; belongs to the N-acetylglucosamine-1-phosphate uridyltransferase family. The protein in the C-terminal section; belongs to the transferase hexapeptide repeat family. Homotrimer. The cofactor is Mg(2+).

Its subcellular location is the cytoplasm. The catalysed reaction is alpha-D-glucosamine 1-phosphate + acetyl-CoA = N-acetyl-alpha-D-glucosamine 1-phosphate + CoA + H(+). It catalyses the reaction N-acetyl-alpha-D-glucosamine 1-phosphate + UTP + H(+) = UDP-N-acetyl-alpha-D-glucosamine + diphosphate. Its pathway is nucleotide-sugar biosynthesis; UDP-N-acetyl-alpha-D-glucosamine biosynthesis; N-acetyl-alpha-D-glucosamine 1-phosphate from alpha-D-glucosamine 6-phosphate (route II): step 2/2. The protein operates within nucleotide-sugar biosynthesis; UDP-N-acetyl-alpha-D-glucosamine biosynthesis; UDP-N-acetyl-alpha-D-glucosamine from N-acetyl-alpha-D-glucosamine 1-phosphate: step 1/1. It participates in bacterial outer membrane biogenesis; LPS lipid A biosynthesis. Its function is as follows. Catalyzes the last two sequential reactions in the de novo biosynthetic pathway for UDP-N-acetylglucosamine (UDP-GlcNAc). The C-terminal domain catalyzes the transfer of acetyl group from acetyl coenzyme A to glucosamine-1-phosphate (GlcN-1-P) to produce N-acetylglucosamine-1-phosphate (GlcNAc-1-P), which is converted into UDP-GlcNAc by the transfer of uridine 5-monophosphate (from uridine 5-triphosphate), a reaction catalyzed by the N-terminal domain. The chain is Bifunctional protein GlmU from Neisseria meningitidis serogroup A / serotype 4A (strain DSM 15465 / Z2491).